We begin with the raw amino-acid sequence, 514 residues long: Histidine ammonia-lyase (514 aa).

The segment at residues 144–146 (ASG) is a cross-link (5-imidazolinone (Ala-Gly)). Ser-145 carries the 2,3-didehydroalanine (Ser) modification.

This sequence belongs to the PAL/histidase family. Post-translationally, contains an active site 4-methylidene-imidazol-5-one (MIO), which is formed autocatalytically by cyclization and dehydration of residues Ala-Ser-Gly.

The protein localises to the cytoplasm. It catalyses the reaction L-histidine = trans-urocanate + NH4(+). It participates in amino-acid degradation; L-histidine degradation into L-glutamate; N-formimidoyl-L-glutamate from L-histidine: step 1/3. This Rhodospirillum rubrum (strain ATCC 11170 / ATH 1.1.1 / DSM 467 / LMG 4362 / NCIMB 8255 / S1) protein is Histidine ammonia-lyase.